We begin with the raw amino-acid sequence, 505 residues long: TBC1 domain family member 22B (505 aa).

Ala2 carries the post-translational modification N-acetylalanine. 2 positions are modified to phosphoserine: Ser58 and Ser116. The tract at residues 105–146 (SKLRVKPERSQSTTSDVPANYKVIKSSSDAQLSRNSSDTCLR) is disordered. Residues 129–146 (KSSSDAQLSRNSSDTCLR) show a composition bias toward polar residues. Position 154 is a phosphoserine (Ser154). Residues 210 to 434 (GVPREVRPVT…RLWDTYQSEP (225 aa)) enclose the Rab-GAP TBC domain.

Interacts with ACBD3 and ARFGEF1. Interacts with YWHAB, YWHAE, YWHAG, YWHAH, YWHAQ and YWHAZ.

May act as a GTPase-activating protein for Rab family protein(s). In Macaca fascicularis (Crab-eating macaque), this protein is TBC1 domain family member 22B (TBC1D22B).